Here is a 220-residue protein sequence, read N- to C-terminus: Pyrrolidone-carboxylate peptidase 1 (220 aa).

Active-site residues include Glu-80, Cys-143, and His-172.

The protein belongs to the peptidase C15 family. Homotetramer.

Its subcellular location is the cytoplasm. The enzyme catalyses Release of an N-terminal pyroglutamyl group from a polypeptide, the second amino acid generally not being Pro.. Functionally, removes 5-oxoproline from various penultimate amino acid residues except L-proline. The polypeptide is Pyrrolidone-carboxylate peptidase 1 (Photorhabdus laumondii subsp. laumondii (strain DSM 15139 / CIP 105565 / TT01) (Photorhabdus luminescens subsp. laumondii)).